Reading from the N-terminus, the 287-residue chain is Rhodopsin (287 aa).

At 1 to 5 (VNGAA) the chain is on the extracellular side. A helical membrane pass occupies residues 6–30 (YAGLCAYMFLLILVGFPVNFLTLYV). At 31–42 (TLEHKKLRTPLN) the chain is on the cytoplasmic side. The helical transmembrane segment at 43–65 (YILLNLAVADLFMVLGGFTTTMY) threads the bilayer. Residues 66–79 (TSAHGYFVLGRLGC) lie on the Extracellular side of the membrane. Cysteine 79 and cysteine 156 are joined by a disulfide. Residues 80–102 (NVEGFFATLGGEIALWSLVVLAV) traverse the membrane as a helical segment. The 'Ionic lock' involved in activated form stabilization signature appears at 103–105 (ERW). Residues 103–121 (ERWIVVCKPISNFRFTEEH) are Cytoplasmic-facing. A helical membrane pass occupies residues 122–142 (AIMGLGFNWVMASACAVPPLV). Residues 143 to 171 (GWSRYIPEGMQCSCGINYYTRSEGFNNES) lie on the Extracellular side of the membrane. Asparagine 169 carries an N-linked (GlcNAc...) asparagine glycan. Residues 172 to 193 (LVMKMLICHFLIPLFVIFFCYG) traverse the membrane as a helical segment. Residues 194–221 (RMLCAVKEAAAAQQESETTQRAEREVSR) lie on the Cytoplasmic side of the membrane. The helical transmembrane segment at 222 to 243 (MVVIMVISFLVCWLPYASVAWY) threads the bilayer. The Extracellular segment spans residues 244-255 (IFCNQGSEFGPV). The helical transmembrane segment at 256–277 (FMTLPAFFAKSASIYNPLIYIC) threads the bilayer. Lysine 265 bears the N6-(retinylidene)lysine mark. At 278-287 (MNKHSRHCMI) the chain is on the cytoplasmic side.

The protein belongs to the G-protein coupled receptor 1 family. Opsin subfamily. Phosphorylated on some or all of the serine and threonine residues present in the C-terminal region. Post-translationally, contains one covalently linked retinal chromophore.

Its subcellular location is the membrane. The protein resides in the cell projection. It is found in the cilium. It localises to the photoreceptor outer segment. Photoreceptor required for image-forming vision at low light intensity. While most salt water fish species use retinal as chromophore, most freshwater fish use 3-dehydroretinal, or a mixture of retinal and 3-dehydroretinal. Light-induced isomerization of 11-cis to all-trans retinal triggers a conformational change that activates signaling via G-proteins. Subsequent receptor phosphorylation mediates displacement of the bound G-protein alpha subunit by arrestin and terminates signaling. This Taurulus bubalis (Long-spined sea scorpion) protein is Rhodopsin (rho).